We begin with the raw amino-acid sequence, 533 residues long: Na(+)/H(+) antiporter NhaB (533 aa).

Transmembrane regions (helical) follow at residues 10-30, 67-87, 96-116, 131-165, 209-229, 247-267, 310-330, 355-375, 396-416, 454-474, and 485-505; these read IGNF…SFLI, PGGL…SQVL, VLLL…LLLF, VSLL…FYSI, LLMH…VGEP, IRMS…CYIV, AFIG…VGLI, EEAL…AVII, LVIF…VFVG, ATPN…APLI, and ALPY…IGFL.

The protein belongs to the NhaB Na(+)/H(+) (TC 2.A.34) antiporter family.

The protein resides in the cell inner membrane. It catalyses the reaction 2 Na(+)(in) + 3 H(+)(out) = 2 Na(+)(out) + 3 H(+)(in). In terms of biological role, na(+)/H(+) antiporter that extrudes sodium in exchange for external protons. The polypeptide is Na(+)/H(+) antiporter NhaB (Shewanella oneidensis (strain ATCC 700550 / JCM 31522 / CIP 106686 / LMG 19005 / NCIMB 14063 / MR-1)).